The primary structure comprises 85 residues: Acyl carrier protein (85 aa).

Positions 4-79 (DELFEKVKEI…NAVNLLSEKL (76 aa)) constitute a Carrier domain. Serine 39 is subject to O-(pantetheine 4'-phosphoryl)serine.

The protein belongs to the acyl carrier protein (ACP) family. In terms of processing, 4'-phosphopantetheine is transferred from CoA to a specific serine of apo-ACP by AcpS. This modification is essential for activity because fatty acids are bound in thioester linkage to the sulfhydryl of the prosthetic group.

The protein localises to the cytoplasm. It functions in the pathway lipid metabolism; fatty acid biosynthesis. In terms of biological role, carrier of the growing fatty acid chain in fatty acid biosynthesis. This is Acyl carrier protein from Petrotoga mobilis (strain DSM 10674 / SJ95).